Here is a 277-residue protein sequence, read N- to C-terminus: UPF0276 protein PP_2398 (277 aa).

It belongs to the UPF0276 family.

This chain is UPF0276 protein PP_2398, found in Pseudomonas putida (strain ATCC 47054 / DSM 6125 / CFBP 8728 / NCIMB 11950 / KT2440).